Consider the following 112-residue polypeptide: uncharacterized protein (112 aa).

The transit peptide at 1–21 (MYLSAQLMRTVTASHLTLRAL) directs the protein to the mitochondrion.

The protein localises to the mitochondrion. This is an uncharacterized protein from Saccharomyces cerevisiae (strain ATCC 204508 / S288c) (Baker's yeast).